A 344-amino-acid chain; its full sequence is MLTLGLESSCDETACAIVNEDKQILANIIASQDIHASYGGVVPELASRAHLHIFPQVINKALQQANLLIEDMDLIAVTQTPGLIGSLSVGVHFGKGIAIGAKKSLIGVNHVEAHLYAAYMAAQNVQFPALGLVVSGAHTAAFFIENPTSYKLIGKTRDDAIGETFDKVGRFLGLPYPAGPLIEKLALEGSEDSYPFSPAKVPNYDFSFSGLKTAVLYAIKGNNSSPRSPAPEISLEKQRDIAASFQKAACTTIAQKLPTIIKEFSCRSILIGGGVAINEYFRSAIQTACNLPVYFPPAKLCSDNAAMIAGLGGENFQKNSSIPEIRICARYQWESVSPFSLASP.

His-110 and His-114 together coordinate Fe cation. Residues 133–137, Asp-166, Gly-179, and Asn-278 each bind substrate; that span reads VVSGA. Position 303 (Asp-303) interacts with Fe cation.

The protein belongs to the KAE1 / TsaD family. The cofactor is Fe(2+).

The protein localises to the cytoplasm. It catalyses the reaction L-threonylcarbamoyladenylate + adenosine(37) in tRNA = N(6)-L-threonylcarbamoyladenosine(37) in tRNA + AMP + H(+). In terms of biological role, required for the formation of a threonylcarbamoyl group on adenosine at position 37 (t(6)A37) in tRNAs that read codons beginning with adenine. Is involved in the transfer of the threonylcarbamoyl moiety of threonylcarbamoyl-AMP (TC-AMP) to the N6 group of A37, together with TsaE and TsaB. TsaD likely plays a direct catalytic role in this reaction. The protein is tRNA N6-adenosine threonylcarbamoyltransferase of Chlamydia pneumoniae (Chlamydophila pneumoniae).